The sequence spans 160 residues: Cyclic pyranopterin monophosphate synthase (160 aa).

Substrate contacts are provided by residues 76 to 78 and 113 to 114; these read MCH and ME. The active site involves Asp-128.

The protein belongs to the MoaC family. In terms of assembly, homohexamer; trimer of dimers.

It carries out the reaction (8S)-3',8-cyclo-7,8-dihydroguanosine 5'-triphosphate = cyclic pyranopterin phosphate + diphosphate. It functions in the pathway cofactor biosynthesis; molybdopterin biosynthesis. In terms of biological role, catalyzes the conversion of (8S)-3',8-cyclo-7,8-dihydroguanosine 5'-triphosphate to cyclic pyranopterin monophosphate (cPMP). This chain is Cyclic pyranopterin monophosphate synthase, found in Brevibacillus brevis (strain 47 / JCM 6285 / NBRC 100599).